Here is a 330-residue protein sequence, read N- to C-terminus: Carbonic anhydrase 1 (330 aa).

Residues 1 to 109 (MSTASAFAIN…AAARIDQITA (109 aa)) are chloroplast transit peptide-like.

It belongs to the beta-class carbonic anhydrase family. As to quaternary structure, homohexamer.

It is found in the cytoplasm. It catalyses the reaction hydrogencarbonate + H(+) = CO2 + H2O. Reversible hydration of carbon dioxide. The protein is Carbonic anhydrase 1 of Flaveria linearis (Narrowleaf yellowtops).